A 763-amino-acid polypeptide reads, in one-letter code: DNA polymerase 3 (763 aa).

The protein belongs to the DNA polymerase type-B family.

The enzyme catalyses DNA(n) + a 2'-deoxyribonucleoside 5'-triphosphate = DNA(n+1) + diphosphate. In Saccharolobus shibatae (strain ATCC 51178 / DSM 5389 / JCM 8931 / NBRC 15437 / B12) (Sulfolobus shibatae), this protein is DNA polymerase 3 (dpo3).